Here is a 98-residue protein sequence, read N- to C-terminus: Protein FAM24A (98 aa).

Positions 1 to 29 are cleaved as a signal peptide; that stretch reads MFDLRTKVMIGIASTLLIAAIMLITLVFC.

This sequence belongs to the FAM24 family.

It is found in the secreted. The sequence is that of Protein FAM24A (Fam24a) from Mus musculus (Mouse).